A 599-amino-acid chain; its full sequence is Protein ref(2)P (599 aa).

In terms of domain architecture, PB1 spans 3-88; that stretch reads EKLLKITYQG…CESNMHVQVA (86 aa). The ZZ-type zinc-finger motif lies at 122-173; that stretch reads HDSVQCDGCGLAPLIGFRYKCVQCSNFDLCQKCESAHKHPEHLMLRMPTNNG. Residues cysteine 127, cysteine 130, cysteine 142, cysteine 145, cysteine 151, cysteine 154, histidine 160, and histidine 163 each contribute to the Zn(2+) site. Disordered regions lie at residues 192–225, 245–319, 357–453, and 507–544; these read RRSR…HARR, TTAT…INLD, GIFA…LDPE, and ASAN…DDKR. Residues 199-211 show a composition bias toward low complexity; the sequence is PFQEASQPAPAAE. A compositionally biased stretch (basic and acidic residues) spans 276–286; it reads KATESEAKPTE. Residues 291-319 show a composition bias toward polar residues; that stretch reads NTDQSVPTTEDPVTTPRSTEPTTPVINLD. Residues 375-411 show a composition bias toward low complexity; that stretch reads QSQSSGQSAASSASQSAVPSAAPSANQSNVPSANQSA. Repeat copies occupy residues 386 to 393, 399 to 406, and 407 to 413. Residues 386–413 form a 3 X 8 AA repeats of S-A-N-Q-S-X-X-P region; sequence SASQSAVPSAAPSANQSNVPSANQSATP. Residues 412-423 are compositionally biased toward polar residues; it reads TPSISGSISDAQ. A compositionally biased stretch (low complexity) spans 511–536; that stretch reads TQTAQVDTVSTSTSTTSVTTNSVGTS. Residues 550 to 595 enclose the UBA domain; it reads HTDERINQSIHAMMAMGFSNEGAWLTQLLESVQGNIPAALDVMHVS.

Interacts with aPKC and Traf6.

The protein localises to the nucleus. It is found in the cytoplasm. Its function is as follows. Required for selective autophagy activation by ubiquitinated proteins. Implicated in sigma rhabdovirus multiplication and necessary for male fertility. Involved in activating transcription of Drs. This is Protein ref(2)P (ref(2)P) from Drosophila simulans (Fruit fly).